The chain runs to 984 residues: Translation initiation factor IF-2 (984 aa).

The segment at 32-402 (PAKNATSTLT…TQPQRAAKRK (371 aa)) is disordered. Over residues 89–123 (PAETEAQASPAQPEAKAAAPAAEAEEAPAAKPAPA) the composition is skewed to low complexity. Basic and acidic residues predominate over residues 126-136 (RKAEARTEAPR). Low complexity-rich tracts occupy residues 154 to 172 (APET…SAAP) and 187 to 197 (AETTESAPAEP). Basic and acidic residues predominate over residues 198–220 (AAEKAPAEKRRYEVSMEPEKDSV). Low complexity predominate over residues 255–270 (RPDPAAVQAQAAAAAQ). Positions 271–283 (AREERAERPDRGP) are enriched in basic and acidic residues. Over residues 308–334 (GRPAPRSGAPRPGGARPAAGFGQPAQA) the composition is skewed to low complexity. Residues 482–651 (PRPPVVTIMG…ALQAEVLELK (170 aa)) form the tr-type G domain. Positions 491-498 (GHVDHGKT) are G1. GTP is bound at residue 491–498 (GHVDHGKT). Residues 516 to 520 (GITQH) form a G2 region. Residues 537-540 (DTPG) form a G3 region. GTP contacts are provided by residues 537-541 (DTPGH) and 591-594 (NKID). Positions 591-594 (NKID) are G4. The tract at residues 627-629 (SAK) is G5.

This sequence belongs to the TRAFAC class translation factor GTPase superfamily. Classic translation factor GTPase family. IF-2 subfamily.

The protein resides in the cytoplasm. In terms of biological role, one of the essential components for the initiation of protein synthesis. Protects formylmethionyl-tRNA from spontaneous hydrolysis and promotes its binding to the 30S ribosomal subunits. Also involved in the hydrolysis of GTP during the formation of the 70S ribosomal complex. The chain is Translation initiation factor IF-2 from Oleidesulfovibrio alaskensis (strain ATCC BAA-1058 / DSM 17464 / G20) (Desulfovibrio alaskensis).